Consider the following 775-residue polypeptide: E3 ubiquitin-protein ligase ICP0 (775 aa).

A disordered region spans residues 1–112 (MEPRPGASTR…PPREDGGSDE (112 aa)). Composition is skewed to basic and acidic residues over residues 10 to 21 (RRPEGRPQREPA) and 45 to 57 (VGGR…HDDD). Positions 58–69 (SASEADSTDTEL) are enriched in acidic residues. Threonine 67 carries the post-translational modification Phosphothreonine; by host; by CK1. The segment at 116-157 (CAVCTDEIAPHLRCDTFPCMHRFCIPCMKTWMQLRNTCPLCN) adopts an RING-type zinc-finger fold. Residues 221–636 (RALSPTHPEP…HAETSGAVPA (416 aa)) are disordered. Residues 231–243 (TTDEDDDDLDDAD) are compositionally biased toward acidic residues. Residues 258 to 284 (RRGAAAPPVTGGASHAAPQPAAARTAP) show a composition bias toward low complexity. The span at 293–302 (GSSNTNTTTN) shows a compositional bias: polar residues. The span at 310–321 (RQSRAAAPRGAS) shows a compositional bias: low complexity. Over residues 322-331 (GPSGGVGVGV) the composition is skewed to gly residues. Residues 369–390 (PASPHRPPAAPMPGSAPRPGPP) show a composition bias toward pro residues. A compositionally biased stretch (low complexity) spans 391–409 (ASAAASGPARPRAAVAPCV). Positions 410–421 (RAPPPGPGPRAP) are enriched in pro residues. Over residues 422–431 (APGAEPAARP) the composition is skewed to low complexity. The span at 439–453 (QSHSSLAQAANQEQS) shows a compositional bias: polar residues. The span at 464-476 (GSGGPGVEGGHGP) shows a compositional bias: gly residues. A compositionally biased stretch (low complexity) spans 477–493 (SRGAAPSGAAPLPSAAS). Polar residues predominate over residues 509-519 (GQENPSPQSTR). Residues 539–549 (GPGGRGQGGPG) show a composition bias toward gly residues. Low complexity predominate over residues 550–592 (TPLTSSAASASSSSASSSSAPTPAGAASSAAGAASSSASASSG). Residues 617-626 (GPRKCARKTR) show a composition bias toward basic residues.

It belongs to the simplexviruses ICp0 family. As to quaternary structure, interacts directly with human RCOR1/CoREST protein, leading to the disruption of the human BHC corepressor complex. Interacts with human CENPA, leading to its degradation. Interacts with human USP7; this interaction modulates ICP0 stability. Interacts with human CDC34. Interacts (when phosphorylated) with human RNF8 (via FHA domain). Interacts with human TRIM27. Interacts with human ZBP1. Interacts with host MORC3; this interaction promotes the degradation of host MORC3. In terms of processing, phosphorylated at Thr-67, leading to promote interaction with host RNF8. Phosphorylated by host CHEK2; leading to increased SUMO-targeted ubiquitin ligase activity of ICP0. Post-translationally, auto-ubiquitinated. Deubiquitinated by host USP7; leading to stabilize it.

It is found in the host cytoplasm. Its subcellular location is the host nucleus. The enzyme catalyses S-ubiquitinyl-[E2 ubiquitin-conjugating enzyme]-L-cysteine + [acceptor protein]-L-lysine = [E2 ubiquitin-conjugating enzyme]-L-cysteine + N(6)-ubiquitinyl-[acceptor protein]-L-lysine.. Its function is as follows. SUMO-targeted ubiquitin ligase that plays an essential role in nuclear antiviral defense evasion triggered by dsDNA viruses. Acts during the initial stages of lytic infection and the reactivation of latent viral genome. Prevents the antiviral effect of nuclear bodies by degrading host PML, SP100 and MORC3. Prevents antiviral response to viral DNA induced by IFI16 by degrading it. Additionally, inhibits host IRF3 nuclear signaling to prevent interferon production by the infected cells. Interestingly, the E3 ubiquitin ligase activity associated with the RING finger domain does not seem to be directly required to inhibit the activation of IRF3 but instead plays a critical role in modulating the cellular localization of ICP0. Upon reactivation of latent genome, suppresses the silencing of viral DNA by dissociating either HDAC1 or HDAC2 from the HDAC-RCOR1-REST-KDM1A complex localized at the ND10 structures and causes their dispersal. Two cellular histone ubiquitin ligases RNF8 and RNF168 are also targeted by ICP0 for degradation, leading to a loss of ubiquitinated forms of H2A, a relief of transcriptional repression, and the activation of latent viral genomes. Enhances the localization of host CCND3 to ND10 bodies that serve as precursors of replication compartments to enable efficient viral replication. Like many RING-finger E3 ubiquitin ligases, ICP0 can induce its own ubiquitination, an activity that promotes its instability due to its targeting to the 26S proteasome for degradation. ICP0 restricts this process by recruiting the cellular ubiquitin-specific protease USP7 that cleaves the anchored ubiquitin chains from ICP0, thereby promoting its stabilization. This chain is E3 ubiquitin-protein ligase ICP0 (ICP0), found in Homo sapiens (Human).